The sequence spans 389 residues: GTPase Obg (389 aa).

The Obg domain occupies 1–159 (MKFVDEAVIR…RSLKLELMLL (159 aa)). Residues 122 to 144 (FHGLGNTRFKSSTNRAPRQKTLG) form a disordered region. Positions 160 to 333 (ADVGLLGMPN…LSLKLIDFIE (174 aa)) constitute an OBG-type G domain. Residues 166-173 (GMPNAGKS), 191-195 (FTTLV), 213-216 (DIPG), 283-286 (NKTD), and 314-316 (SAY) contribute to the GTP site. Mg(2+) contacts are provided by S173 and T193.

It belongs to the TRAFAC class OBG-HflX-like GTPase superfamily. OBG GTPase family. In terms of assembly, monomer. It depends on Mg(2+) as a cofactor.

It is found in the cytoplasm. In terms of biological role, an essential GTPase which binds GTP, GDP and possibly (p)ppGpp with moderate affinity, with high nucleotide exchange rates and a fairly low GTP hydrolysis rate. Plays a role in control of the cell cycle, stress response, ribosome biogenesis and in those bacteria that undergo differentiation, in morphogenesis control. The protein is GTPase Obg of Shewanella woodyi (strain ATCC 51908 / MS32).